Consider the following 155-residue polypeptide: uncharacterized protein (155 aa).

The region spanning 6 to 155 (TCVRNARLAD…CDEIAMVKTL (150 aa)) is the N-acetyltransferase domain.

Belongs to the acetyltransferase family.

This is an uncharacterized protein from Chlorobaculum tepidum (strain ATCC 49652 / DSM 12025 / NBRC 103806 / TLS) (Chlorobium tepidum).